A 59-amino-acid polypeptide reads, in one-letter code: Protein QUA-QUINE STARCH (59 aa).

In terms of tissue distribution, expressed in hypocotyls, leaves, vasculature, hydathodes, trichomes, pedicels, sepals, filaments, mature pollen, stigma papillae, styles, siliques, root and shoot tips, but not in shoot meristem, petals or root epidermis.

It is found in the cytoplasm. In terms of biological role, involved in regulating carbon and nitrogen allocation to starch and protein. In Arabidopsis thaliana (Mouse-ear cress), this protein is Protein QUA-QUINE STARCH.